The following is a 122-amino-acid chain: Small ribosomal subunit protein uS13 (122 aa).

The disordered stretch occupies residues 99-122 (RGQRTHTNARTRKGPAKAIAGKKK).

Belongs to the universal ribosomal protein uS13 family. Part of the 30S ribosomal subunit. Forms a loose heterodimer with protein S19. Forms two bridges to the 50S subunit in the 70S ribosome.

In terms of biological role, located at the top of the head of the 30S subunit, it contacts several helices of the 16S rRNA. In the 70S ribosome it contacts the 23S rRNA (bridge B1a) and protein L5 of the 50S subunit (bridge B1b), connecting the 2 subunits; these bridges are implicated in subunit movement. Contacts the tRNAs in the A and P-sites. The sequence is that of Small ribosomal subunit protein uS13 from Parvibaculum lavamentivorans (strain DS-1 / DSM 13023 / NCIMB 13966).